The chain runs to 750 residues: (13E)-labda-7,13-dien-15-ol synthase (750 aa).

Mg(2+) contacts are provided by Asp284, Asp286, Asp501, Asp505, Asn647, Thr651, and Glu655. Positions 284–287 match the DXDD motif motif; it reads DIDD. The DDXXD motif signature appears at 501–505; it reads DDLAD.

The protein belongs to the terpene synthase family. Mg(2+) serves as cofactor.

It catalyses the reaction geranylgeranyl diphosphate + H2O = (13E)-labda-7,13-dien-15-ol + diphosphate. It participates in secondary metabolite biosynthesis; terpenoid biosynthesis. In terms of biological role, bifunctional diterpene synthase that directly generates the endocyclic double bond, as well as the hydroxyl group: produces an endocyclic double bond isomer of copalyl diphosphate (CPP), and carries out subsequent replacement of the diphosphate by a hydroxyl group to form (13E)-labda-7,13-dien-15-ol. This Selaginella moellendorffii (Spikemoss) protein is (13E)-labda-7,13-dien-15-ol synthase.